The following is a 128-amino-acid chain: Diacylglycerol kinase (128 aa).

An a divalent metal cation-binding site is contributed by glutamate 34. 2 consecutive transmembrane segments (helical) span residues serine 35–threonine 55 and phenylalanine 58–asparagine 78. Residue glutamate 75 is the Proton acceptor of the active site. Residue glutamate 82 participates in a divalent metal cation binding. Residues leucine 108–asparagine 128 traverse the membrane as a helical segment.

Belongs to the bacterial diacylglycerol kinase family. Mg(2+) serves as cofactor.

Its subcellular location is the cell inner membrane. The enzyme catalyses a 1,2-diacyl-sn-glycerol + ATP = a 1,2-diacyl-sn-glycero-3-phosphate + ADP + H(+). Functionally, catalyzes the ATP-dependent phosphorylation of sn-l,2-diacylglycerol (DAG) to phosphatidic acid. Involved in the recycling of diacylglycerol produced as a by-product during membrane-derived oligosaccharide (MDO) biosynthesis. This Helicobacter pylori (strain J99 / ATCC 700824) (Campylobacter pylori J99) protein is Diacylglycerol kinase (dgkA).